A 98-amino-acid chain; its full sequence is HssA/B-like protein 34 (98 aa).

Disordered regions lie at residues 1–26 (MTLF…SFGS) and 60–98 (AKSS…SCSC). The span at 60-72 (AKSSGGSCGGKGG) shows a compositional bias: gly residues. A compositionally biased stretch (basic residues) spans 73–88 (SHNHGHGHGHGPHGHG). Gly residues predominate over residues 89 to 98 (GKGSGGSCSC).

Belongs to the hssA/B family.

This chain is HssA/B-like protein 34 (hssl34), found in Dictyostelium discoideum (Social amoeba).